Here is a 270-residue protein sequence, read N- to C-terminus: Putative pyruvate, phosphate dikinase regulatory protein 2 (270 aa).

151 to 158 provides a ligand contact to ADP; that stretch reads GVSRTSKT.

Belongs to the pyruvate, phosphate/water dikinase regulatory protein family. PDRP subfamily.

It carries out the reaction N(tele)-phospho-L-histidyl/L-threonyl-[pyruvate, phosphate dikinase] + ADP = N(tele)-phospho-L-histidyl/O-phospho-L-threonyl-[pyruvate, phosphate dikinase] + AMP + H(+). The enzyme catalyses N(tele)-phospho-L-histidyl/O-phospho-L-threonyl-[pyruvate, phosphate dikinase] + phosphate + H(+) = N(tele)-phospho-L-histidyl/L-threonyl-[pyruvate, phosphate dikinase] + diphosphate. Its function is as follows. Bifunctional serine/threonine kinase and phosphorylase involved in the regulation of the pyruvate, phosphate dikinase (PPDK) by catalyzing its phosphorylation/dephosphorylation. The sequence is that of Putative pyruvate, phosphate dikinase regulatory protein 2 from Listeria monocytogenes serotype 4b (strain F2365).